The sequence spans 328 residues: Phosphate acyltransferase (328 aa).

Belongs to the PlsX family. Homodimer. Probably interacts with PlsY.

The protein localises to the cytoplasm. It carries out the reaction a fatty acyl-[ACP] + phosphate = an acyl phosphate + holo-[ACP]. It participates in lipid metabolism; phospholipid metabolism. Its function is as follows. Catalyzes the reversible formation of acyl-phosphate (acyl-PO(4)) from acyl-[acyl-carrier-protein] (acyl-ACP). This enzyme utilizes acyl-ACP as fatty acyl donor, but not acyl-CoA. This chain is Phosphate acyltransferase, found in Staphylococcus aureus (strain MRSA252).